The chain runs to 543 residues: Excitatory amino acid transporter 1 (543 aa).

Residues 1–47 (MTKSNGEEPRMGSRMERFQQGVRKRTLLAKKKVQNITKEDVKSYLFR) are Cytoplasmic-facing. A helical transmembrane segment spans residues 48 to 68 (NAFVLLTVSAVIVGTILGFAL). At 69–86 (RPYKMSYREVKYFSFPGE) the chain is on the extracellular side. A helical membrane pass occupies residues 87 to 108 (LLMRMLQMLVLPLIISSLVTGM). At 109-122 (AALDSKASGKMGMR) the chain is on the cytoplasmic side. The chain crosses the membrane as a helical span at residues 123-145 (AVVYYMTTTIIAVVIGIIIVIII). Over 146–236 (HPGKGTKENM…IREEMVPVPG (91 aa)) the chain is Extracellular. Residues 237 to 260 (SVNGVNALGLVVFSMCFGFVIGNM) traverse the membrane as a helical segment. At 261–269 (KEQGQALRE) the chain is on the cytoplasmic side. A helical membrane pass occupies residues 270–297 (FFDSLNEAIMRLVAVIMWYAPLGILFLI). Over 298 to 318 (AGKILEMEDMGVIGGQLAMYT) the chain is Extracellular. Residues 319–340 (VTVIVGLLIHAVIVLPLLYFLV) form a helical membrane-spanning segment. Residues 341–345 (TRKNP) are Cytoplasmic-facing. Positions 346-376 (WVFIGGLLQALITALGTSSSSATLPITFKCL) form an intramembrane region, discontinuously helical. L-aspartate is bound at residue 363–365 (SSS). Topologically, residues 377–385 (EENNGVDKR) are cytoplasmic. A helical transmembrane segment spans residues 386-412 (ITRFVLPVGATINMDGTALYEALAAIF). G394, T396, and N398 together coordinate Na(+). Position 402 (T402) interacts with L-aspartate. The Extracellular portion of the chain corresponds to 413–425 (IAQVNNFDLNFGQ). The discontinuously helical intramembrane region spans 426-459 (IITISITATAASIGAAGIPQAGLVTMVIVLTSVG). 443–447 (IPQAG) is a binding site for L-aspartate. Over 460-472 (LPTDDITLIIAVD) the chain is Extracellular. A helical transmembrane segment spans residues 473 to 494 (WFLDRLRTTTNVLGDSLGAGIV). D476 and N483 together coordinate L-aspartate. Na(+) is bound by residues N483 and D487. Over 495 to 543 (EHLSRHELKNRDVEMGNSVIEENEMKKPYQLIAQDNEPEKPVADSETKM) the chain is Cytoplasmic. The residue at position 512 (S512) is a Phosphoserine. The tract at residues 522-543 (PYQLIAQDNEPEKPVADSETKM) is disordered. The segment covering 531 to 543 (EPEKPVADSETKM) has biased composition (basic and acidic residues).

The protein belongs to the dicarboxylate/amino acid:cation symporter (DAACS) (TC 2.A.23) family. SLC1A3 subfamily. As to quaternary structure, homotrimer. Post-translationally, glycosylated. In terms of tissue distribution, detected in brain and cerebellum. Both isoform GLAST-1 and GLAST-1A are expressed in bone and brain. In brain isoform GLAST-1 is highly enriched in the Purkinje cell layer in cerebellum.

It is found in the cell membrane. It carries out the reaction K(+)(in) + L-glutamate(out) + 3 Na(+)(out) + H(+)(out) = K(+)(out) + L-glutamate(in) + 3 Na(+)(in) + H(+)(in). The catalysed reaction is K(+)(in) + L-aspartate(out) + 3 Na(+)(out) + H(+)(out) = K(+)(out) + L-aspartate(in) + 3 Na(+)(in) + H(+)(in). The enzyme catalyses D-aspartate(out) + K(+)(in) + 3 Na(+)(out) + H(+)(out) = D-aspartate(in) + K(+)(out) + 3 Na(+)(in) + H(+)(in). In terms of biological role, sodium-dependent, high-affinity amino acid transporter that mediates the uptake of L-glutamate and also L-aspartate and D-aspartate. Functions as a symporter that transports one amino acid molecule together with two or three Na(+) ions and one proton, in parallel with the counter-transport of one K(+) ion. Plays a redundant role in the rapid removal of released glutamate from the synaptic cleft, which is essential for terminating the postsynaptic action of glutamate. The polypeptide is Excitatory amino acid transporter 1 (Slc1a3) (Rattus norvegicus (Rat)).